Consider the following 418-residue polypeptide: uncharacterized protein (418 aa).

This is an uncharacterized protein from Saccharomyces cerevisiae (strain ATCC 204508 / S288c) (Baker's yeast).